The following is a 337-amino-acid chain: MRGLLQDIPVRGQKRVLLAAPRGYCAGVDRAVIAVEKALERYGAPVYVRKQIVHNIHVVSELERQGAIFVDEVDEVPEGAHIVFSAHGVSPAVVAAAADRGLRAIDATCPLVTKVHREAVRFARDDFEILLIGHEGHEEVEGTAGHAPERVTLVNSPDEADTIEVKDPDRVVWLSQTTLSVDETMETVRRLRERFPNLQNPPSDDICYATQNRQVAIKKVAQSADLVIVVGSANSSNSVRLVEVALEYGAKAAYRVDYASEIRQEWLDGVATVGVTSGASVPEVLVQEVLADLAGAGYADVQEVKTAEEDLMFSLPKELRKDIAGKRDERALGGRRS.

Cys25 serves as a coordination point for [4Fe-4S] cluster. Residues His54 and His87 each contribute to the (2E)-4-hydroxy-3-methylbut-2-enyl diphosphate site. 2 residues coordinate dimethylallyl diphosphate: His54 and His87. Isopentenyl diphosphate-binding residues include His54 and His87. [4Fe-4S] cluster is bound at residue Cys109. Residue His137 participates in (2E)-4-hydroxy-3-methylbut-2-enyl diphosphate binding. His137 contributes to the dimethylallyl diphosphate binding site. His137 is a binding site for isopentenyl diphosphate. The Proton donor role is filled by Glu139. (2E)-4-hydroxy-3-methylbut-2-enyl diphosphate is bound at residue Thr177. Cys207 is a [4Fe-4S] cluster binding site. Residues Ser235, Ser236, Asn237, and Ser280 each contribute to the (2E)-4-hydroxy-3-methylbut-2-enyl diphosphate site. Residues Ser235, Ser236, Asn237, and Ser280 each coordinate dimethylallyl diphosphate. Ser235, Ser236, Asn237, and Ser280 together coordinate isopentenyl diphosphate.

This sequence belongs to the IspH family. [4Fe-4S] cluster serves as cofactor.

The catalysed reaction is isopentenyl diphosphate + 2 oxidized [2Fe-2S]-[ferredoxin] + H2O = (2E)-4-hydroxy-3-methylbut-2-enyl diphosphate + 2 reduced [2Fe-2S]-[ferredoxin] + 2 H(+). It carries out the reaction dimethylallyl diphosphate + 2 oxidized [2Fe-2S]-[ferredoxin] + H2O = (2E)-4-hydroxy-3-methylbut-2-enyl diphosphate + 2 reduced [2Fe-2S]-[ferredoxin] + 2 H(+). It participates in isoprenoid biosynthesis; dimethylallyl diphosphate biosynthesis; dimethylallyl diphosphate from (2E)-4-hydroxy-3-methylbutenyl diphosphate: step 1/1. Its pathway is isoprenoid biosynthesis; isopentenyl diphosphate biosynthesis via DXP pathway; isopentenyl diphosphate from 1-deoxy-D-xylulose 5-phosphate: step 6/6. Functionally, catalyzes the conversion of 1-hydroxy-2-methyl-2-(E)-butenyl 4-diphosphate (HMBPP) into a mixture of isopentenyl diphosphate (IPP) and dimethylallyl diphosphate (DMAPP). Acts in the terminal step of the DOXP/MEP pathway for isoprenoid precursor biosynthesis. The chain is 4-hydroxy-3-methylbut-2-enyl diphosphate reductase from Leifsonia xyli subsp. xyli (strain CTCB07).